A 1342-amino-acid chain; its full sequence is DNA-directed RNA polymerase subunit beta (1342 aa).

This sequence belongs to the RNA polymerase beta chain family. The RNAP catalytic core consists of 2 alpha, 1 beta, 1 beta' and 1 omega subunit. When a sigma factor is associated with the core the holoenzyme is formed, which can initiate transcription.

It catalyses the reaction RNA(n) + a ribonucleoside 5'-triphosphate = RNA(n+1) + diphosphate. Its function is as follows. DNA-dependent RNA polymerase catalyzes the transcription of DNA into RNA using the four ribonucleoside triphosphates as substrates. The polypeptide is DNA-directed RNA polymerase subunit beta (Buchnera aphidicola subsp. Acyrthosiphon pisum (strain Tuc7)).